The following is a 396-amino-acid chain: Decapping nuclease RAI1 (396 aa).

107 to 109 (YRG) contributes to the substrate binding site. Residue glutamate 179 participates in a divalent metal cation binding. Substrate is bound at residue glutamate 228. A divalent metal cation-binding residues include aspartate 230, glutamate 249, and leucine 250. The substrate site is built by lysine 251 and glutamine 275.

It belongs to the DXO/Dom3Z family. As to quaternary structure, interacts with RAT1; the interaction is direct, stabilizes RAT1 protein structure and stimulates its exoribonuclease activity. The interaction also stimulates RAI1 pyrophosphohydrolase activity, probably by recruiting it to mRNA substrates. A divalent metal cation serves as cofactor.

The protein localises to the nucleus. It carries out the reaction a 5'-end NAD(+)-phospho-ribonucleoside in mRNA + H2O = a 5'-end phospho-ribonucleoside in mRNA + NAD(+) + H(+). The catalysed reaction is a 5'-end (N(7)-methyl 5'-triphosphoguanosine)-ribonucleoside-ribonucleotide in mRNA + H2O = a (N(7)-methyl 5'-triphosphoguanosine)-nucleoside + a 5'-end phospho-ribonucleoside in mRNA + H(+). It catalyses the reaction a 5'-end triphospho-ribonucleoside in mRNA + H2O = a 5'-end phospho-ribonucleoside in mRNA + diphosphate + H(+). Functionally, decapping enzyme for NAD-capped RNAs: specifically hydrolyzes the nicotinamide adenine dinucleotide (NAD) cap from a subset of RNAs by removing the entire NAD moiety from the 5'-end of an NAD-capped RNA. The NAD-cap is present at the 5'-end of some RNAs and snoRNAs. In contrast to the canonical 5'-end N7 methylguanosine (m7G) cap, the NAD cap promotes mRNA decay. Also acts as a non-canonical decapping enzyme that removes the entire cap structure of m7G capped or incompletely capped RNAs. Has decapping activity toward incomplete 5'-end m7G cap mRNAs such as unmethylated 5'-end-capped RNA (cap0), while it has no activity toward 2'-O-ribose methylated m7G cap (cap1). Also possesses RNA 5'-pyrophosphohydrolase activity by hydrolyzing the 5'-end triphosphate to release pyrophosphates. Stimulates exoribonuclease activity of Rat1, allowing it to degrade RNAs with stable secondary structure more effectively. This Scheffersomyces stipitis (strain ATCC 58785 / CBS 6054 / NBRC 10063 / NRRL Y-11545) (Yeast) protein is Decapping nuclease RAI1.